The primary structure comprises 350 residues: Phenylalanine--tRNA ligase alpha subunit (350 aa).

Mg(2+) is bound at residue glutamate 271.

It belongs to the class-II aminoacyl-tRNA synthetase family. Phe-tRNA synthetase alpha subunit type 1 subfamily. Tetramer of two alpha and two beta subunits. Mg(2+) serves as cofactor.

The protein resides in the cytoplasm. The enzyme catalyses tRNA(Phe) + L-phenylalanine + ATP = L-phenylalanyl-tRNA(Phe) + AMP + diphosphate + H(+). The sequence is that of Phenylalanine--tRNA ligase alpha subunit from Delftia acidovorans (strain DSM 14801 / SPH-1).